The primary structure comprises 424 residues: Glutamyl-tRNA reductase (424 aa).

Substrate-binding positions include 49–52 (TCNR), Ser-108, 113–115 (EPQ), and Gln-119. The Nucleophile role is filled by Cys-50. 188-193 (GAGETI) lines the NADP(+) pocket.

It belongs to the glutamyl-tRNA reductase family. As to quaternary structure, homodimer.

It carries out the reaction (S)-4-amino-5-oxopentanoate + tRNA(Glu) + NADP(+) = L-glutamyl-tRNA(Glu) + NADPH + H(+). The protein operates within porphyrin-containing compound metabolism; protoporphyrin-IX biosynthesis; 5-aminolevulinate from L-glutamyl-tRNA(Glu): step 1/2. Functionally, catalyzes the NADPH-dependent reduction of glutamyl-tRNA(Glu) to glutamate 1-semialdehyde (GSA). In Hahella chejuensis (strain KCTC 2396), this protein is Glutamyl-tRNA reductase.